Reading from the N-terminus, the 99-residue chain is MANVQYYDVILKPVVTEKSMNAMAEKKYTFLVHPDANKTMIKEAVERMFEGTKVAKVNTMNCEGKNKRRGMVTGKTAKTKKAIVQLTADSKDIEIFAGL.

It belongs to the universal ribosomal protein uL23 family. As to quaternary structure, part of the 50S ribosomal subunit. Contacts protein L29, and trigger factor when it is bound to the ribosome.

One of the early assembly proteins it binds 23S rRNA. One of the proteins that surrounds the polypeptide exit tunnel on the outside of the ribosome. Forms the main docking site for trigger factor binding to the ribosome. The chain is Large ribosomal subunit protein uL23 from Agathobacter rectalis (strain ATCC 33656 / DSM 3377 / JCM 17463 / KCTC 5835 / VPI 0990) (Eubacterium rectale).